Here is a 930-residue protein sequence, read N- to C-terminus: MVYQSEFALETEMMEQLKSNGYETVTIRNEQQLLDNFRSILNERHADKLNGDPLTDKEFQRLLTMINGKGIFESARILRDKMPLKRDDESEVYLSFLDTRHWCQNKFQITNQVSVDDTYKARYDVTILINGLPLVQIELKRRGIDINEAFNQVMRYRKQNYTGLFRYIQLFIISNGIDTRYISNNDGEIYKSHMFYWSDKENNRINTLNEFTETFLRPCHIAKMISRYMILNETDNILMAMRPYQVHAVEALIHQATETSNNGYIWHTTGSGKTLTSFKASQVLSEQDDIKKVIFLVDRKDLDSQTEEEFNKFSKGSVDKTNNTAQLVKQLKDKSLPLIVTTIQKMSKAIQNNAEALDQYKTDKVVFIIDECHRSQFGDMHRIVRQHFNNAQYFGFTGTPRFEENQSQDGRSTADIFGRCLHTYLIKDAIHDGNVLGFSVDYINTIKAQNIDTETDELVEGINTDEVWLSDQRVELIARHITENHDKYTRNRQYSAIFTVQSIPALVKYYDAFKKISKDYEHPLKVAGVFSYAANEERNEGEVDEAHSRGKLEEVIQDYNLNFGTNFSTDTFQEYFNHISKNVKKGVKDNKIDVLIVVNMFLTGFDSKVLNTLYVDKNLKYHDLIQAYSRTNRVEKETKPFGKIVNYRDLKQNTDNALKLFSQTEDTDRVLMRDYDEYKAEFVDALAELKAVALKPQDMDQVQDENEKKAFVEAFRLVSKLVLRLKAFDEFDFTKANIGMNEQEFEDYKSKYFAIYDEVKPKRGEVEKVSILNDIDFEIEILRNDRINVSYIMDLVRQIDLKDKAEQQRNRDQIRRMLDNADDPTLRLKRDLLREFIDDVIPELSEEDNIDEAYILFENAKRESEFNQFAQQQAVDEQVLKDITGEYEYSGIVNQDHLKELVGDKKLREKRQTKKAVTSFVEEVSEKYSS.

The 165-residue stretch at 254–418 (HQATETSNNG…DGRSTADIFG (165 aa)) folds into the Helicase ATP-binding domain. 268-274 (TTGSGKT) contacts ATP.

Belongs to the HsdR family. In terms of assembly, the type I restriction/modification system is composed of three polypeptides R, M and S.

It carries out the reaction Endonucleolytic cleavage of DNA to give random double-stranded fragments with terminal 5'-phosphates, ATP is simultaneously hydrolyzed.. Its function is as follows. The restriction (R) subunit of a type I restriction enzyme that recognizes an undetermined sequence and cleaves a random distance away. Subunit R is required for both nuclease and ATPase activities, but not for modification. After locating a non-methylated recognition site, the enzyme complex serves as a molecular motor that translocates DNA in an ATP-dependent manner until a collision occurs that triggers cleavage. The sequence is that of Type I restriction enzyme SsaAORF53P endonuclease subunit from Staphylococcus saprophyticus subsp. saprophyticus (strain ATCC 15305 / DSM 20229 / NCIMB 8711 / NCTC 7292 / S-41).